Here is a 356-residue protein sequence, read N- to C-terminus: Kelch domain-containing protein VC_1773 (356 aa).

4 Kelch repeats span residues Lys72 to Pro125, Thr163 to Asn210, Asn288 to Gly331, and Ala333 to Met355.

The polypeptide is Kelch domain-containing protein VC_1773 (Vibrio cholerae serotype O1 (strain ATCC 39315 / El Tor Inaba N16961)).